Here is a 92-residue protein sequence, read N- to C-terminus: DNA-directed RNA polymerase subunit Rpo11 (92 aa).

It belongs to the archaeal Rpo11/eukaryotic RPB11/RPC19 RNA polymerase subunit family. In terms of assembly, part of the RNA polymerase complex.

It is found in the cytoplasm. The enzyme catalyses RNA(n) + a ribonucleoside 5'-triphosphate = RNA(n+1) + diphosphate. In terms of biological role, DNA-dependent RNA polymerase (RNAP) catalyzes the transcription of DNA into RNA using the four ribonucleoside triphosphates as substrates. The protein is DNA-directed RNA polymerase subunit Rpo11 of Pyrobaculum aerophilum (strain ATCC 51768 / DSM 7523 / JCM 9630 / CIP 104966 / NBRC 100827 / IM2).